We begin with the raw amino-acid sequence, 735 residues long: Polycomb protein sop-2 (735 aa).

The segment covering 1-15 has biased composition (polar residues); it reads MSSNLTSNEMSSTSA. Disordered stretches follow at residues 1 to 59, 223 to 288, and 300 to 534; these read MSSN…SSSS, AARS…APAA, and PQES…PVLQ. An RNA-binding region spans residues 224 to 503; it reads ARSSRMAARR…APATPATPAS (280 aa). The segment covering 239 to 288 has biased composition (low complexity); it reads YRGAFRGAARGAPSRRPAPAAEVAPETPVAAPMAPAAPAAPATPEAAPAA. Basic and acidic residues-rich tracts occupy residues 317–355 and 389–398; these read DTSK…DGGR and RAAEKKKPED. A compositionally biased stretch (acidic residues) spans 399-413; the sequence is SDAAEEQEVEMEVDN. A compositionally biased stretch (basic and acidic residues) spans 450 to 470; sequence VEPKKEPVDEPAEKIPKRSEA. The span at 471–504 shows a compositional bias: low complexity; it reads APEVPATATTKEAPPSTSSSPPDAPATPATPASS. Positions 520 to 534 are enriched in polar residues; it reads LTGSPPESETPPVLQ. An SAM-like region spans residues 621–712; sequence LVENNHEATL…YGTEVLNHYR (92 aa).

As to quaternary structure, homodimer. Interacts with ubc-9. Binds through its N-terminal region to the N-terminal region of sor-1. In terms of processing, sumoylated by ubc-9. Sumoylation is required for the transcriptional regulation of homeotic genes. In terms of tissue distribution, widely expressed. Weakly expressed in most somatic cells of 50-cell stage embryos. At 200 cell stage, it is strongly expressed. By comma stage, it is expressed in most somatic cells.

The protein resides in the nucleus. Functionally, polycomb group (PcG) protein. PcG proteins act by forming multiprotein complexes, which are required to maintain the transcriptionally repressive state of homeotic genes throughout development. PcG proteins are not required to initiate repression, but to maintain it during later stages of development. Also required to repress expression of other genes and for localization of sor-1. Binds RNA. The protein is Polycomb protein sop-2 (sop-2) of Caenorhabditis elegans.